The sequence spans 778 residues: Probable potassium transporter 13 (778 aa).

At 1–28 (MDVEGGGGGGGGAPPRGRNSWGWQKGTL) the chain is on the cytoplasmic side. The chain crosses the membrane as a helical span at residues 29–49 (LLAYQSFGVVYGDLCISPVYV). Residues 50–72 (YKNTFSGKLRLHEEDEEILGVLS) are Extracellular-facing. The helical transmembrane segment at 73 to 93 (LVFWSLTLIPLLKYIILVLGA) threads the bilayer. At 94 to 156 (DDNGEGGTFA…AFFEKHYSLR (63 aa)) the chain is on the cytoplasmic side. The helical transmembrane segment at 157–177 (VVLLLFVLMGTSMVIGDGVLT) threads the bilayer. Over 178–199 (PTMSVLAAVSGLRIKFPELHEN) the chain is Extracellular. N-linked (GlcNAc...) asparagine glycosylation occurs at Asn-199. Residues 200–220 (YTVLLACVILIGLFALQHYGT) form a helical membrane-spanning segment. Over 221-222 (RR) the chain is Cytoplasmic. The helical transmembrane segment at 223–243 (VGFLFAPILISWLTCIGGIGI) threads the bilayer. Topologically, residues 244–276 (YNIIKWNPSVIRALSPYYIYNFFRKAGKDGWSS) are extracellular. Residues 277 to 297 (LGGIVLCLTGAEAMFADLGHF) form a helical membrane-spanning segment. The Cytoplasmic portion of the chain corresponds to 298-303 (SKLSLR). The chain crosses the membrane as a helical span at residues 304-324 (LGFTIVVYPCLVLAYMGEAAY). The Extracellular segment spans residues 325 to 343 (LSKHREDLQSSFYKALPDR). Residues 344-364 (VFWPVLFIATLATAVGSQAII) form a helical membrane-spanning segment. Topologically, residues 365-395 (SATFSIISQCRALGCFPRIKVVHTSSHVHGQ) are cytoplasmic. A helical transmembrane segment spans residues 396 to 416 (IYIPEVNWVLMSLCLAVTIGF). Residues 417–424 (RDTEMIGN) are Extracellular-facing. A helical membrane pass occupies residues 425–445 (AYGLAVILVMCATTCLMFLVI). Topologically, residues 446 to 451 (TTVWNR) are cytoplasmic. Residues 452-472 (WVVWAAAFTVVFGSVELLYLS) traverse the membrane as a helical segment. At 473-477 (ACLAK) the chain is on the extracellular side. Residues 478 to 498 (VPHGGWLPLLLSLTTLLVMST) form a helical membrane-spanning segment. Residues 499–778 (WHYGTAMKQQ…LIEVGMAYRV (280 aa)) lie on the Cytoplasmic side of the membrane. Polar residues predominate over residues 655–677 (PATSSSGGSNQHAFDAGTTTSSC). Residues 655 to 704 (PATSSSGGSNQHAFDAGTTTSSCEIDATAGGGGRRKVRFDNDGGGGGEEE) form a disordered region.

The protein belongs to the HAK/KUP transporter (TC 2.A.72.3) family.

The protein localises to the membrane. Functionally, high-affinity potassium transporter. The chain is Probable potassium transporter 13 (HAK13) from Oryza sativa subsp. japonica (Rice).